The sequence spans 349 residues: Transmembrane protein 255A (349 aa).

4 helical membrane-spanning segments follow: residues 30–50, 57–77, 89–109, and 226–246; these read IYVT…GLAA, VTVG…LGII, LVAS…CAIV, and TILN…LGGF. Positions 301 to 329 are disordered; sequence VFPSSPPSGLSDEPQSASPSPSYMWSSSA. Residues 316–329 show a composition bias toward low complexity; that stretch reads SASPSPSYMWSSSA.

The protein belongs to the TMEM255 family.

The protein resides in the membrane. The sequence is that of Transmembrane protein 255A (TMEM255A) from Macaca fascicularis (Crab-eating macaque).